Consider the following 299-residue polypeptide: Putative hydrolase YtaP (299 aa).

This sequence belongs to the dienelactone hydrolase family.

The sequence is that of Putative hydrolase YtaP (ytaP) from Bacillus subtilis (strain 168).